A 243-amino-acid chain; its full sequence is Outer membrane protein A (243 aa).

The next 5 membrane-spanning stretches (beta stranded) occupy residues 1 to 8, 13 to 21, 48 to 57, 62 to 69, and 88 to 96; these read LTAKLGYP, LDIYTRLGG, PVFAGGVEWA, IATRLEYQ, and LLSLGVSYR. A run of 4 repeats spans residues 107–108, 109–110, 111–112, and 113–114. The segment at 107–114 is 4 X 2 AA tandem repeats of A-P; sequence APAPAPAP. An OmpA-like domain is found at 116–243; the sequence is VQTKHFTLKS…RRVEIEVKGI (128 aa). Cysteines 217 and 229 form a disulfide.

Belongs to the outer membrane OOP (TC 1.B.6) superfamily. OmpA family. In terms of assembly, monomer and homodimer.

It is found in the cell outer membrane. In terms of biological role, with TolR probably plays a role in maintaining the position of the peptidoglycan cell wall in the periplasm. Acts as a porin with low permeability that allows slow penetration of small solutes; an internal gate slows down solute passage. Its function is as follows. Required for conjugation with F-type plasmids; probably serves as the mating receptor on recipient cells. The chain is Outer membrane protein A from Escherichia fergusonii.